Reading from the N-terminus, the 393-residue chain is Seven-bladed beta-propeller protein Rv1057 (393 aa).

Residues 208 to 230 (DGGRIGSRSRSRQKSSKPRGNQA) form a disordered region. A compositionally biased stretch (basic residues) spans 214–224 (SRSRSRQKSSK).

In terms of biological role, may play an important role in host-pathogen interactions and in ESAT-6 secretion. The sequence is that of Seven-bladed beta-propeller protein Rv1057 from Mycobacterium tuberculosis (strain ATCC 25618 / H37Rv).